An 836-amino-acid chain; its full sequence is Taste receptor type 1 member 2 (836 aa).

The signal sequence occupies residues 1–19 (MGPRAKAVCSLFILLQVLA). The Extracellular segment spans residues 20–565 (EPAENSDFYL…AFLEWHEPST (546 aa)). N-linked (GlcNAc...) asparagine glycosylation is found at asparagine 84, asparagine 292, asparagine 312, asparagine 351, asparagine 427, asparagine 479, asparagine 486, asparagine 526, and asparagine 546. Residues 566–586 (IFVVMLTILGFLSTLAIMVIF) form a helical membrane-spanning segment. At 587-601 (WRHLHTPVVRSAGGP) the chain is on the cytoplasmic side. The helical transmembrane segment at 602-622 (MCFLMLVPLLLAYAMVPMYIG) threads the bilayer. Topologically, residues 623-634 (QPTFFSCLWRQT) are extracellular. The helical transmembrane segment at 635 to 655 (FFTLCFTICISCITVRSFQIV) threads the bilayer. Topologically, residues 656–680 (CIFKMARRLPRAYGYWVRCHGPYVF) are cytoplasmic. A helical transmembrane segment spans residues 681-701 (VASFMVLKVVIVAGNVLATTA). Topologically, residues 702–724 (NPTARPDPDDPNIMVLSCNYRRA) are extracellular. Residues 725–745 (LLFNTSLDLLLSVAGFSFAYM) traverse the membrane as a helical segment. At 746 to 757 (GKELPTNYNEAK) the chain is on the cytoplasmic side. A helical membrane pass occupies residues 758 to 778 (FITLCMTFYFTSSVSLCTFMS). Residues 779–781 (VYD) are Extracellular-facing. A helical membrane pass occupies residues 782-802 (GVLVTILDLLITVLNLLGISF). Residues 803–836 (GYFGPKCYMVLFYPERNTQVYFSSMIQGYTMGKD) are Cytoplasmic-facing.

It belongs to the G-protein coupled receptor 3 family. TAS1R subfamily. As to quaternary structure, forms heterodimers with TAS1R3.

The protein localises to the cell membrane. In terms of biological role, putative taste receptor. TAS1R2/TAS1R3 recognizes diverse natural and synthetic sweeteners. The protein is Taste receptor type 1 member 2 (TAS1R2) of Canis lupus familiaris (Dog).